The chain runs to 490 residues: 2,3-bisphosphoglycerate-independent phosphoglycerate mutase (490 aa).

D9 and S59 together coordinate Mn(2+). S59 functions as the Phosphoserine intermediate in the catalytic mechanism. Residues H116, 145–146 (RD), R175, R181, 246–249 (RSDR), and K319 each bind substrate. Mn(2+) is bound by residues D385, H389, D426, H427, and H444.

This sequence belongs to the BPG-independent phosphoglycerate mutase family. In terms of assembly, monomer. Mn(2+) serves as cofactor.

It carries out the reaction (2R)-2-phosphoglycerate = (2R)-3-phosphoglycerate. Its pathway is carbohydrate degradation; glycolysis; pyruvate from D-glyceraldehyde 3-phosphate: step 3/5. In terms of biological role, catalyzes the interconversion of 2-phosphoglycerate and 3-phosphoglycerate. The polypeptide is 2,3-bisphosphoglycerate-independent phosphoglycerate mutase (Helicobacter hepaticus (strain ATCC 51449 / 3B1)).